A 354-amino-acid polypeptide reads, in one-letter code: ORC1-type DNA replication protein 9 (354 aa).

Residues 63-67 (TGKTC), Tyr195, and Arg207 each bind ATP.

This sequence belongs to the CDC6/cdc18 family.

Its function is as follows. Involved in regulation of DNA replication. This Halobacterium salinarum (strain ATCC 700922 / JCM 11081 / NRC-1) (Halobacterium halobium) protein is ORC1-type DNA replication protein 9 (orc9-1).